Here is a 411-residue protein sequence, read N- to C-terminus: tRNA pseudouridine synthase Pus10 (411 aa).

One can recognise a THUMP domain in the interval 65–192 (ALAKCHLPTR…SGQVKVVRNP (128 aa)). Residue D244 is the Nucleophile of the active site. Substrate is bound by residues Y305 and Y376.

Belongs to the pseudouridine synthase Pus10 family.

It catalyses the reaction uridine(54) in tRNA = pseudouridine(54) in tRNA. The catalysed reaction is uridine(55) in tRNA = pseudouridine(55) in tRNA. In terms of biological role, responsible for synthesis of pseudouridine from uracil-54 and uracil-55 in the psi GC loop of transfer RNAs. The polypeptide is tRNA pseudouridine synthase Pus10 (Pyrobaculum arsenaticum (strain DSM 13514 / JCM 11321 / PZ6)).